Reading from the N-terminus, the 524-residue chain is Magnesium/proton exchanger 2 (524 aa).

The next 11 helical transmembrane spans lie at glycine 28–isoleucine 48, isoleucine 88–isoleucine 108, glycine 125–methionine 145, leucine 157–isoleucine 177, valine 185–alanine 205, valine 325–proline 345, isoleucine 349–glycine 369, isoleucine 377–threonine 397, isoleucine 430–tyrosine 450, leucine 462–leucine 482, and methionine 496–serine 516.

This sequence belongs to the Ca(2+):cation antiporter (CaCA) (TC 2.A.19) family. MHX subfamily.

It is found in the vacuole membrane. In terms of biological role, vacuolar transporter that exchanges protons with Mg(2+), Zn(2+) and Fe(2+) ions. May control the partitioning of Mg(2+) and Zn(2+) between plant organs. The polypeptide is Magnesium/proton exchanger 2 (MHX2) (Oryza sativa subsp. japonica (Rice)).